An 80-amino-acid chain; its full sequence is OMEGA-myrmeciitoxin(02)-Mg1a (80 aa).

The N-terminal stretch at 1–30 (MKNNYISTCIVYLMAALLLISVISIKECTA) is a signal peptide. Residues 35 to 75 (YGDPCSDDLKDYCIHGDCFFLKELNQPACRCYTGYYGSRCE) enclose the EGF-like domain. 3 disulfide bridges follow: Cys-39–Cys-52, Cys-47–Cys-63, and Cys-65–Cys-74.

It belongs to the EGF domain peptide family. Expressed by the venom gland.

Its subcellular location is the secreted. In terms of biological role, ant peptide with probable defensive activity which acts as a potent agonist of the mammalian epidermal growth factor receptor (EGFR) (EC(50)=6.3 nM). Mimics, both structurally and functionally, vertebrate epidermal growth factor (EGF) peptide hormones. In vivo, intraplantar injection in mice causes long-lasting (several days) hypersensitivity of the injected paw to both mechanical and thermal stimuli. Its long-lasting effect is unusual for venom toxins whose effects are usually immediate. One possible explanation is that it would reduce the duration of a nest attack, discourage future attacks, or enhance the actions of subsequent exposure to other pain-inducing venom peptides. The polypeptide is OMEGA-myrmeciitoxin(02)-Mg1a (Myrmecia gulosa (Red bulldog ant)).